Reading from the N-terminus, the 84-residue chain is Beta-defensin 119 (84 aa).

Positions 1–21 (MKFLFLFLAILLATKIPVISG) are cleaved as a signal peptide. 3 cysteine pairs are disulfide-bonded: C28–C55, C35–C49, and C39–C56.

The protein belongs to the beta-defensin family.

It localises to the secreted. Its function is as follows. Has antibacterial activity. This chain is Beta-defensin 119 (DEFB119), found in Macaca fascicularis (Crab-eating macaque).